Consider the following 195-residue polypeptide: Dephospho-CoA kinase (195 aa).

One can recognise a DPCK domain in the interval 3–195 (IIGLTGSIAM…LFVIKSLLKN (193 aa)). 11–16 (AMGKST) contributes to the ATP binding site.

This sequence belongs to the CoaE family.

The protein resides in the cytoplasm. It catalyses the reaction 3'-dephospho-CoA + ATP = ADP + CoA + H(+). It participates in cofactor biosynthesis; coenzyme A biosynthesis; CoA from (R)-pantothenate: step 5/5. Its function is as follows. Catalyzes the phosphorylation of the 3'-hydroxyl group of dephosphocoenzyme A to form coenzyme A. This is Dephospho-CoA kinase from Bartonella henselae (strain ATCC 49882 / DSM 28221 / CCUG 30454 / Houston 1) (Rochalimaea henselae).